The sequence spans 234 residues: Uridylate kinase (234 aa).

9–12 (KLSG) lines the ATP pocket. Gly-51 is a UMP binding site. ATP contacts are provided by Gly-52 and Arg-56. Residues Asp-71 and 132–139 (CGNPFFTT) each bind UMP. ATP-binding residues include Thr-159, Tyr-165, and Asp-168.

This sequence belongs to the UMP kinase family. As to quaternary structure, homohexamer.

It is found in the cytoplasm. The catalysed reaction is UMP + ATP = UDP + ADP. It participates in pyrimidine metabolism; CTP biosynthesis via de novo pathway; UDP from UMP (UMPK route): step 1/1. Its activity is regulated as follows. Inhibited by UTP. Its function is as follows. Catalyzes the reversible phosphorylation of UMP to UDP. This Prochlorococcus marinus (strain MIT 9515) protein is Uridylate kinase.